We begin with the raw amino-acid sequence, 293 residues long: Epidermal growth factor-like protein 8 (293 aa).

Positions methionine 1–glycine 25 are cleaved as a signal peptide. The 79-residue stretch at serine 34–alanine 112 folds into the EMI domain. Cystine bridges form between cysteine 38–cysteine 97, cysteine 65–cysteine 71, cysteine 96–cysteine 110, cysteine 114–cysteine 124, cysteine 118–cysteine 130, cysteine 132–cysteine 141, cysteine 148–cysteine 159, cysteine 155–cysteine 168, and cysteine 170–cysteine 183. The N-linked (GlcNAc...) asparagine glycan is linked to asparagine 50. Residues glutamate 111–histidine 142 form the EGF-like 1 domain. The region spanning aspartate 144–methionine 184 is the EGF-like 2; calcium-binding domain. Residues serine 195–alanine 232 adopt a coiled-coil conformation.

It is found in the secreted. The polypeptide is Epidermal growth factor-like protein 8 (EGFL8) (Homo sapiens (Human)).